A 160-amino-acid chain; its full sequence is Putative flagellin YvzB (160 aa).

This sequence belongs to the bacterial flagellin family. As to quaternary structure, interacts with FliW.

The protein resides in the bacterial flagellum. The sequence is that of Putative flagellin YvzB (yvzB) from Bacillus subtilis (strain 168).